A 688-amino-acid polypeptide reads, in one-letter code: Glycine--tRNA ligase beta subunit (688 aa).

It belongs to the class-II aminoacyl-tRNA synthetase family. In terms of assembly, tetramer of two alpha and two beta subunits.

Its subcellular location is the cytoplasm. It catalyses the reaction tRNA(Gly) + glycine + ATP = glycyl-tRNA(Gly) + AMP + diphosphate. This is Glycine--tRNA ligase beta subunit (glyS) from Haemophilus influenzae (strain ATCC 51907 / DSM 11121 / KW20 / Rd).